An 88-amino-acid chain; its full sequence is Small ribosomal subunit protein bS20 (88 aa).

The disordered stretch occupies residues Met-1–Arg-25.

Belongs to the bacterial ribosomal protein bS20 family.

Its function is as follows. Binds directly to 16S ribosomal RNA. The sequence is that of Small ribosomal subunit protein bS20 from Azorhizobium caulinodans (strain ATCC 43989 / DSM 5975 / JCM 20966 / LMG 6465 / NBRC 14845 / NCIMB 13405 / ORS 571).